Here is a 54-residue protein sequence, read N- to C-terminus: Large ribosomal subunit protein bL33 (54 aa).

This sequence belongs to the bacterial ribosomal protein bL33 family.

The sequence is that of Large ribosomal subunit protein bL33 from Parafrankia sp. (strain EAN1pec).